Consider the following 421-residue polypeptide: E3 ubiquitin-protein ligase RMD5 (421 aa).

The region spanning 176 to 236 (EFIEMGQIVH…QIVKHGNPVE (61 aa)) is the CTLH domain. The RING-Gid-type zinc finger occupies 361–404 (CPVLKEETTTENPPYSLACHHIISKKALDRLSKNGTITFKCPYC).

This sequence belongs to the RMD5/GID2 family. In terms of assembly, identified in the GID/CTLH complex. In the absence of stress, the complex exists as an inactive anticipatory complex (GID(Ant)), composed of VID30/GID1, the E3 ubiquitin-ligase RMD5/GID2, VID28/GID5, GID8, and the RING-like subunit FYV10/GID9, awaiting a substrate receptor to form the active E3 ligase complex. When cells are shifted to glucose-containing medium, the substrate receptor VID24/GID4 is induced and becomes part of the complex, named GID(SR4). Additionally, GID7 transforms the GID(SR4) E3 ligase core into a higher-order supramolecular assembly (Chelator-GID(SR4)) specifically tailored for FBP1 ubiquitination. Under osmotic or heat stress, the substrate receptor GID10 is induced and becomes part of the complex, named GID(SR10). Within the GID complex, interacts directly with GID8, FYV10/GID9 and VID28/GID5.

The protein localises to the cytoplasm. The catalysed reaction is S-ubiquitinyl-[E2 ubiquitin-conjugating enzyme]-L-cysteine + [acceptor protein]-L-lysine = [E2 ubiquitin-conjugating enzyme]-L-cysteine + N(6)-ubiquitinyl-[acceptor protein]-L-lysine.. It functions in the pathway protein modification; protein ubiquitination. Functionally, E3 ubiquitin-protein ligase component of the GID E3 ligase complex recruiting N termini and catalyzing ubiquitination of proteins targeted for degradation. GID E3 is regulated through assembly with interchangeable N-degron-binding substrate receptors induced by distinct environmental perturbations. Required for the adaptation to the presence of glucose in the growth medium; mediates in association with the substrate receptor VID24/GID4 the degradation of enzymes involved in gluconeogenesis when cells are shifted to glucose-containing medium. Required for proteasome-dependent catabolite degradation of fructose-1,6-bisphosphatase (FBP1), malate dehydrogenase (MDH2), and other gluconeogenic enzymes. In Saccharomyces cerevisiae (strain ATCC 204508 / S288c) (Baker's yeast), this protein is E3 ubiquitin-protein ligase RMD5.